A 202-amino-acid chain; its full sequence is LexA repressor (202 aa).

Active-site for autocatalytic cleavage activity residues include serine 123 and lysine 159.

Belongs to the peptidase S24 family. In terms of assembly, homodimer.

The enzyme catalyses Hydrolysis of Ala-|-Gly bond in repressor LexA.. Its function is as follows. Binds the consensus sequence 5'-TGTTC-N(4)-GAACA-3'; some genes have a tandem consensus sequence, at high concentrations their binding is cooperative. Binds to the promoters of a number of genes, including dinB, imuA, lexA, recA, recQ, splB and uvrA. Represses a number of genes involved in the response to DNA damage (SOS response). In the presence of single-stranded DNA, RecA interacts with LexA causing an autocatalytic cleavage which disrupts the DNA-binding part of LexA, leading to derepression of the SOS regulon and eventually DNA repair. This is LexA repressor from Verrucomicrobium spinosum (strain ATCC 43997 / DSM 4136 / JCM 18804 / IFAM 1439).